The primary structure comprises 228 residues: 5'-methylthioadenosine/S-adenosylhomocysteine nucleosidase (228 aa).

Catalysis depends on glutamate 11, which acts as the Proton acceptor. Substrate is bound by residues glycine 77, isoleucine 151, and 172 to 173 (ME). Aspartate 196 serves as the catalytic Proton donor.

This sequence belongs to the PNP/UDP phosphorylase family. MtnN subfamily.

It carries out the reaction S-adenosyl-L-homocysteine + H2O = S-(5-deoxy-D-ribos-5-yl)-L-homocysteine + adenine. The catalysed reaction is S-methyl-5'-thioadenosine + H2O = 5-(methylsulfanyl)-D-ribose + adenine. It catalyses the reaction 5'-deoxyadenosine + H2O = 5-deoxy-D-ribose + adenine. It participates in amino-acid biosynthesis; L-methionine biosynthesis via salvage pathway; S-methyl-5-thio-alpha-D-ribose 1-phosphate from S-methyl-5'-thioadenosine (hydrolase route): step 1/2. In terms of biological role, catalyzes the irreversible cleavage of the glycosidic bond in both 5'-methylthioadenosine (MTA) and S-adenosylhomocysteine (SAH/AdoHcy) to adenine and the corresponding thioribose, 5'-methylthioribose and S-ribosylhomocysteine, respectively. Also cleaves 5'-deoxyadenosine, a toxic by-product of radical S-adenosylmethionine (SAM) enzymes, into 5-deoxyribose and adenine. In Staphylococcus aureus (strain MRSA252), this protein is 5'-methylthioadenosine/S-adenosylhomocysteine nucleosidase.